The primary structure comprises 492 residues: Catalase (492 aa).

Active-site residues include histidine 65 and asparagine 138. Residue tyrosine 348 participates in heme binding.

Belongs to the catalase family. In terms of assembly, homotetramer. Requires heme as cofactor.

It localises to the cytoplasm. The protein localises to the cytosol. It is found in the peroxisome matrix. The catalysed reaction is 2 H2O2 = O2 + 2 H2O. Functionally, catalyzes the degradation of hydrogen peroxide (H(2)O(2)) generated by peroxisomal oxidases to water and oxygen, thereby protecting cells from the toxic effects of hydrogen peroxide. In Vigna radiata var. radiata (Mung bean), this protein is Catalase.